The following is a 219-amino-acid chain: Small ribosomal subunit protein uS3 (219 aa).

Residues 38 to 106 (IREYITARLK…RVHINILEVK (69 aa)) form the KH type-2 domain.

Belongs to the universal ribosomal protein uS3 family. As to quaternary structure, part of the 30S ribosomal subunit. Forms a tight complex with proteins S10 and S14.

Its function is as follows. Binds the lower part of the 30S subunit head. Binds mRNA in the 70S ribosome, positioning it for translation. The sequence is that of Small ribosomal subunit protein uS3 from Bacillus cytotoxicus (strain DSM 22905 / CIP 110041 / 391-98 / NVH 391-98).